The chain runs to 294 residues: Bifunctional protein FolD (294 aa).

Residues 166–168 (GRS), S191, and I232 each bind NADP(+).

The protein belongs to the tetrahydrofolate dehydrogenase/cyclohydrolase family. As to quaternary structure, homodimer.

It catalyses the reaction (6R)-5,10-methylene-5,6,7,8-tetrahydrofolate + NADP(+) = (6R)-5,10-methenyltetrahydrofolate + NADPH. It carries out the reaction (6R)-5,10-methenyltetrahydrofolate + H2O = (6R)-10-formyltetrahydrofolate + H(+). It functions in the pathway one-carbon metabolism; tetrahydrofolate interconversion. Its function is as follows. Catalyzes the oxidation of 5,10-methylenetetrahydrofolate to 5,10-methenyltetrahydrofolate and then the hydrolysis of 5,10-methenyltetrahydrofolate to 10-formyltetrahydrofolate. The sequence is that of Bifunctional protein FolD from Afipia carboxidovorans (strain ATCC 49405 / DSM 1227 / KCTC 32145 / OM5) (Oligotropha carboxidovorans).